Here is a 249-residue protein sequence, read N- to C-terminus: 3-deoxy-manno-octulosonate cytidylyltransferase (249 aa).

It belongs to the KdsB family.

It localises to the cytoplasm. The catalysed reaction is 3-deoxy-alpha-D-manno-oct-2-ulosonate + CTP = CMP-3-deoxy-beta-D-manno-octulosonate + diphosphate. It functions in the pathway nucleotide-sugar biosynthesis; CMP-3-deoxy-D-manno-octulosonate biosynthesis; CMP-3-deoxy-D-manno-octulosonate from 3-deoxy-D-manno-octulosonate and CTP: step 1/1. Its pathway is bacterial outer membrane biogenesis; lipopolysaccharide biosynthesis. In terms of biological role, activates KDO (a required 8-carbon sugar) for incorporation into bacterial lipopolysaccharide in Gram-negative bacteria. The sequence is that of 3-deoxy-manno-octulosonate cytidylyltransferase from Serratia proteamaculans (strain 568).